The chain runs to 201 residues: Holliday junction resolvase RecU (201 aa).

Thr-85, Asp-87, Glu-100, and Gln-119 together coordinate Mg(2+).

The protein belongs to the RecU family. Requires Mg(2+) as cofactor.

It is found in the cytoplasm. The enzyme catalyses Endonucleolytic cleavage at a junction such as a reciprocal single-stranded crossover between two homologous DNA duplexes (Holliday junction).. In terms of biological role, endonuclease that resolves Holliday junction intermediates in genetic recombination. Cleaves mobile four-strand junctions by introducing symmetrical nicks in paired strands. Promotes annealing of linear ssDNA with homologous dsDNA. Required for DNA repair, homologous recombination and chromosome segregation. This Geobacillus thermodenitrificans (strain NG80-2) protein is Holliday junction resolvase RecU.